The sequence spans 189 residues: Ion-translocating oxidoreductase complex subunit B (189 aa).

Residues 1–26 are hydrophobic; it reads MSAVMIAVVLLGLLALVFGAILGFAA. Positions 32–90 constitute a 4Fe-4S domain; the sequence is EGDPLVDQVESLLPQTQCGQCGYPGCRPYAEAIAGGDQINKCPPGGTATMEKIAELMGV. [4Fe-4S] cluster contacts are provided by Cys-49, Cys-52, Cys-57, Cys-73, Cys-114, Cys-117, Cys-120, Cys-124, Cys-144, Cys-147, Cys-150, and Cys-154. 4Fe-4S ferredoxin-type domains follow at residues 105–134 and 136–164; these read KVAYIREDECIGCTKCIQACPVDAIVGAGK and MHTVITQDCTGCDLCVEPCPVDCIDMLPV.

This sequence belongs to the 4Fe4S bacterial-type ferredoxin family. RnfB subfamily. As to quaternary structure, the complex is composed of six subunits: RnfA, RnfB, RnfC, RnfD, RnfE and RnfG. [4Fe-4S] cluster is required as a cofactor.

The protein localises to the cell inner membrane. Part of a membrane-bound complex that couples electron transfer with translocation of ions across the membrane. In Shewanella amazonensis (strain ATCC BAA-1098 / SB2B), this protein is Ion-translocating oxidoreductase complex subunit B.